The following is a 373-amino-acid chain: Homoserine O-acetyltransferase (373 aa).

The AB hydrolase-1 domain occupies 46-355 (NAILICHPLT…NPNGHDSFLL (310 aa)). Ser-151 acts as the Nucleophile in catalysis. Arg-221 contributes to the substrate binding site. Active-site residues include Asp-317 and His-350. Asp-351 lines the substrate pocket.

The protein belongs to the AB hydrolase superfamily. MetX family. In terms of assembly, homodimer.

It is found in the cytoplasm. It catalyses the reaction L-homoserine + acetyl-CoA = O-acetyl-L-homoserine + CoA. It functions in the pathway amino-acid biosynthesis; L-methionine biosynthesis via de novo pathway; O-acetyl-L-homoserine from L-homoserine: step 1/1. Transfers an acetyl group from acetyl-CoA to L-homoserine, forming acetyl-L-homoserine. This Zymomonas mobilis subsp. mobilis (strain ATCC 31821 / ZM4 / CP4) protein is Homoserine O-acetyltransferase.